A 326-amino-acid chain; its full sequence is Glycerol-3-phosphate dehydrogenase [NAD(P)+] (326 aa).

Trp-15, Arg-35, and Lys-107 together coordinate NADPH. Sn-glycerol 3-phosphate contacts are provided by Lys-107, Gly-135, and Ser-137. Residue Ala-139 coordinates NADPH. 5 residues coordinate sn-glycerol 3-phosphate: Lys-190, Asp-243, Ser-253, Arg-254, and Asn-255. Lys-190 serves as the catalytic Proton acceptor. Residue Arg-254 participates in NADPH binding. Leu-273 and Glu-275 together coordinate NADPH.

Belongs to the NAD-dependent glycerol-3-phosphate dehydrogenase family.

It localises to the cytoplasm. The enzyme catalyses sn-glycerol 3-phosphate + NAD(+) = dihydroxyacetone phosphate + NADH + H(+). The catalysed reaction is sn-glycerol 3-phosphate + NADP(+) = dihydroxyacetone phosphate + NADPH + H(+). The protein operates within membrane lipid metabolism; glycerophospholipid metabolism. Functionally, catalyzes the reduction of the glycolytic intermediate dihydroxyacetone phosphate (DHAP) to sn-glycerol 3-phosphate (G3P), the key precursor for phospholipid synthesis. The protein is Glycerol-3-phosphate dehydrogenase [NAD(P)+] of Bradyrhizobium sp. (strain BTAi1 / ATCC BAA-1182).